We begin with the raw amino-acid sequence, 524 residues long: Probable pectinesterase/pectinesterase inhibitor 42 (524 aa).

The N-terminal stretch at 1 to 22 (MLVKVFSFFILMITMVVIGVSK) is a signal peptide. The pectinesterase inhibitor 42 stretch occupies residues 23–172 (EYCDDKHSCQ…ISKAKVALAL (150 aa)). A pectinesterase 42 region spans residues 215 to 510 (DVVVAKDGTG…FTVAKLLDGE (296 aa)). Residues Asn265 and Asn281 are each glycosylated (N-linked (GlcNAc...) asparagine). Thr290 contacts substrate. Asp343 serves as the catalytic Proton donor; for pectinesterase activity. A disulfide bridge connects residues Cys357 and Cys377. The Nucleophile; for pectinesterase activity role is filled by Asp364. N-linked (GlcNAc...) asparagine glycosylation is present at Asn412. Residues Arg430 and Trp432 each contribute to the substrate site.

The protein in the N-terminal section; belongs to the PMEI family. In the C-terminal section; belongs to the pectinesterase family. In terms of tissue distribution, expressed in siliques but not in flower buds.

It localises to the secreted. The protein resides in the cell wall. The enzyme catalyses [(1-&gt;4)-alpha-D-galacturonosyl methyl ester](n) + n H2O = [(1-&gt;4)-alpha-D-galacturonosyl](n) + n methanol + n H(+). It participates in glycan metabolism; pectin degradation; 2-dehydro-3-deoxy-D-gluconate from pectin: step 1/5. In terms of biological role, acts in the modification of cell walls via demethylesterification of cell wall pectin. This chain is Probable pectinesterase/pectinesterase inhibitor 42 (PME42), found in Arabidopsis thaliana (Mouse-ear cress).